Here is a 191-residue protein sequence, read N- to C-terminus: MVKMIVGLGNPGSKYNDTKHNIGFMAIDRIVKNLDVNFTEDKNFKAEIGSDFINGEKIYFIKPTTFMNNSGIAVKALLTYYNISIKDMIIIYDDLDMEVGKIRFRQKGSAGGHNGIKSIIAHLGTQEFDRIKVGIGRPNGRMTVINHVLGKFDKNDEIMISNTLDKVDNAVKYYLQTNDFQKTMQKYNGLK.

Tyr15 lines the tRNA pocket. His20 functions as the Proton acceptor in the catalytic mechanism. Residues Phe66, Asn68, and Asn114 each contribute to the tRNA site.

The protein belongs to the PTH family. As to quaternary structure, monomer.

Its subcellular location is the cytoplasm. It catalyses the reaction an N-acyl-L-alpha-aminoacyl-tRNA + H2O = an N-acyl-L-amino acid + a tRNA + H(+). In terms of biological role, hydrolyzes ribosome-free peptidyl-tRNAs (with 1 or more amino acids incorporated), which drop off the ribosome during protein synthesis, or as a result of ribosome stalling. Its function is as follows. Catalyzes the release of premature peptidyl moieties from peptidyl-tRNA molecules trapped in stalled 50S ribosomal subunits, and thus maintains levels of free tRNAs and 50S ribosomes. This is Peptidyl-tRNA hydrolase from Streptococcus agalactiae serotype Ia (strain ATCC 27591 / A909 / CDC SS700).